A 213-amino-acid chain; its full sequence is Ribosomal RNA large subunit methyltransferase E (213 aa).

Positions 68, 70, 88, 104, and 127 each coordinate S-adenosyl-L-methionine. Lysine 167 serves as the catalytic Proton acceptor.

The protein belongs to the class I-like SAM-binding methyltransferase superfamily. RNA methyltransferase RlmE family.

It localises to the cytoplasm. It catalyses the reaction uridine(2552) in 23S rRNA + S-adenosyl-L-methionine = 2'-O-methyluridine(2552) in 23S rRNA + S-adenosyl-L-homocysteine + H(+). In terms of biological role, specifically methylates the uridine in position 2552 of 23S rRNA at the 2'-O position of the ribose in the fully assembled 50S ribosomal subunit. The protein is Ribosomal RNA large subunit methyltransferase E of Neorickettsia sennetsu (strain ATCC VR-367 / Miyayama) (Ehrlichia sennetsu).